The chain runs to 228 residues: 2,3-bisphosphoglycerate-dependent phosphoglycerate mutase (228 aa).

Substrate-binding positions include Arg8–Asn15, Thr21–Gly22, Arg60, Glu87–Tyr90, Lys98, Arg114–Arg115, and Gly180–Asn181. Catalysis depends on His9, which acts as the Tele-phosphohistidine intermediate. Glu87 (proton donor/acceptor) is an active-site residue.

Belongs to the phosphoglycerate mutase family. BPG-dependent PGAM subfamily. Homodimer.

The catalysed reaction is (2R)-2-phosphoglycerate = (2R)-3-phosphoglycerate. It participates in carbohydrate degradation; glycolysis; pyruvate from D-glyceraldehyde 3-phosphate: step 3/5. Catalyzes the interconversion of 2-phosphoglycerate and 3-phosphoglycerate. In Sphingopyxis alaskensis (strain DSM 13593 / LMG 18877 / RB2256) (Sphingomonas alaskensis), this protein is 2,3-bisphosphoglycerate-dependent phosphoglycerate mutase.